A 74-amino-acid polypeptide reads, in one-letter code: MSSGGLLLLLGLLTLWEVLTPVSSKDRPKKLGLCPPRPQKPCVKECKNDWSCPGQQKCCNYGCIDECRDPIFVN.

Positions Met-1 to Ser-24 are cleaved as a signal peptide. Residues Arg-27–Ile-71 form the WAP domain. 4 disulfide bridges follow: Cys-34-Cys-59, Cys-42-Cys-63, Cys-46-Cys-58, and Cys-52-Cys-67.

This sequence belongs to the venom waprin family. In terms of tissue distribution, expressed by the venom gland.

Its subcellular location is the secreted. Damages membranes of susceptible bacteria. Has no hemolytic activity. Not toxic to mice. Does not inhibit the proteinases elastase and cathepsin G. The chain is Porwaprin-a from Pseudechis porphyriacus (Red-bellied black snake).